The following is a 540-amino-acid chain: Synaptotagmin-3 (540 aa).

Residues 9 to 29 traverse the membrane as a helical segment; the sequence is GIIGFVIGIPIGLILGFFVLI. In terms of domain architecture, SMP-LTD spans 67 to 249; the sequence is DYERVDWFNK…WPQVLEIPIL (183 aa). The tract at residues 227-509 is phospholipid binding; that stretch reads QETIKRQVSS…ELGHVDINLD (283 aa). C2 domains lie at 240–363 and 401–521; these read WPQV…EFNL and RKES…NQKY. The Ca(2+) site is built by Asp277, Asp283, Asp333, Asp335, and Asp341.

The protein belongs to the synaptotagmin family. It depends on Ca(2+) as a cofactor.

Its subcellular location is the membrane. Its function is as follows. May be involved in membrane trafficking. The polypeptide is Synaptotagmin-3 (SYT3) (Arabidopsis thaliana (Mouse-ear cress)).